A 671-amino-acid polypeptide reads, in one-letter code: DNA ligase (671 aa).

NAD(+)-binding positions include 31–35, 80–81, and glutamate 110; these read DAEYD and SL. The active-site N6-AMP-lysine intermediate is lysine 112. NAD(+) is bound by residues arginine 133, glutamate 167, lysine 283, and lysine 307. The Zn(2+) site is built by cysteine 401, cysteine 404, cysteine 419, and cysteine 424. One can recognise a BRCT domain in the interval 587–671; it reads EEELVFAGKT…YLPDEGGLNE (85 aa).

It belongs to the NAD-dependent DNA ligase family. LigA subfamily. The cofactor is Mg(2+). Mn(2+) serves as cofactor.

It carries out the reaction NAD(+) + (deoxyribonucleotide)n-3'-hydroxyl + 5'-phospho-(deoxyribonucleotide)m = (deoxyribonucleotide)n+m + AMP + beta-nicotinamide D-nucleotide.. In terms of biological role, DNA ligase that catalyzes the formation of phosphodiester linkages between 5'-phosphoryl and 3'-hydroxyl groups in double-stranded DNA using NAD as a coenzyme and as the energy source for the reaction. It is essential for DNA replication and repair of damaged DNA. This chain is DNA ligase, found in Listeria innocua serovar 6a (strain ATCC BAA-680 / CLIP 11262).